Reading from the N-terminus, the 137-residue chain is Large ribosomal subunit protein uL13 (137 aa).

The residue at position 55 (Arg55) is a Citrulline. Position 73 is a phosphoserine (Ser73). Arg136 bears the Citrulline mark.

The protein belongs to the universal ribosomal protein uL13 family. In terms of assembly, component of the 60S ribosome. Component of the GAIT complex. Interacts with EIF4G1. In terms of processing, phosphorylation at Ser-73 upon interferon-gamma treatment in macrophages involves a DAPK1-DAPK3 kinase cascade and is causing release from the ribosome, association with the GAIT complex and subsequent involvement in transcript-selective translation inhibition. Post-translationally, citrullinated by PADI4.

The protein localises to the cytoplasm. Its function is as follows. Associated with ribosomes but is not required for canonical ribosome function and has extra-ribosomal functions. Component of the GAIT (gamma interferon-activated inhibitor of translation) complex which mediates interferon-gamma-induced transcript-selective translation inhibition in inflammation processes. Upon interferon-gamma activation and subsequent phosphorylation dissociates from the ribosome and assembles into the GAIT complex which binds to stem loop-containing GAIT elements in the 3'-UTR of diverse inflammatory mRNAs (such as ceruplasmin) and suppresses their translation. In the GAIT complex interacts with m7G cap-bound eIF4G at or near the eIF3-binding site and blocks the recruitment of the 43S ribosomal complex. Involved in methylation of rRNA. The sequence is that of Large ribosomal subunit protein uL13 (RPL13A) from Sus scrofa (Pig).